Reading from the N-terminus, the 3473-residue chain is Genome polyprotein (3473 aa).

The stretch at 514-604 forms a coiled coil; it reads EVQDALEKSM…RNDIEALKKK (91 aa). Disordered stretches follow at residues 602–644 and 1278–1306; these read KKKP…SEAQ and YLADEQPTTSAPRTSIVNTEDDPPTEGEI. Polar residues-rich tracts occupy residues 607–622 and 1278–1295; these read QSVTPLPSPSGNSGTA and YLADEQPTTSAPRTSIVN. A run of 2 helical transmembrane segments spans residues 1496 to 1516 and 1595 to 1615; these read DKWIWAALASILVGAALLHYY and MSSLLTILSVVASLVMWGKIP. An SF3 helicase domain is found at 1751–1917; it reads LELMNESYTY…PDVPKNEANP (167 aa). 1777–1784 contributes to the ATP binding site; that stretch reads GAPGVGKS. The chain crosses the membrane as a helical span at residues 2363–2383; sequence ILLAIGASVAVAGVAVGAVIL. The segment covering 2394–2404 has biased composition (acidic residues); that stretch reads EDEEIEGEEGE. Disordered stretches follow at residues 2394–2415 and 2438–2465; these read EDEEIEGEEGETQASGAHESDG and VAEAHEEKDAEKPRKSGNPTRKSYLGLS. Over residues 2438 to 2451 the composition is skewed to basic and acidic residues; it reads VAEAHEEKDAEKPR. A Peptidase C3 domain is found at 2632-2850; that stretch reads GVDRDLSMTN…YAETLTQEHL (219 aa). Catalysis depends on for picornain 3C-like protease activity residues His-2680, Glu-2717, and Cys-2811. The 132-residue stretch at 3155-3286 folds into the RdRp catalytic domain; the sequence is TKGFAGDYSK…SVHEEFLDVY (132 aa).

Specific enzymatic cleavages by picornain 3C-like protease in vivo yield mature proteins. Picornain 3C-like protease is autocatalytically processed.

Its subcellular location is the virion. It localises to the host membrane. The catalysed reaction is RNA(n) + a ribonucleoside 5'-triphosphate = RNA(n+1) + diphosphate. Picornain 3C-like protease is a thiol protease that probably cleaves the polyprotein. The sequence is that of Genome polyprotein from Oryza sativa (Rice).